The primary structure comprises 353 residues: MGCGMSTEDKEGKARNEEIENQLKRDKMMQRNEIKMLLLGAGESGKSTILKQMKLIHEGGYSRDERESFKEIIFSNTVQSMRVILEAMESLELPLEDQRMEYHVQTIFMQPAQIEGDVLPPEVGSAIEAVWKDRGVQDCFKRSREYQLNDSARYYFDNIARIAAPDYMPNDQDVLRSRVKTTGITETTFIIGDLTYRMFDVGGQRSERKKWIHCFENVTTILFLVAISEYDQLLFEDETVNRMQEALTLFDSICNSRWFIKTSIILFLNKIDRFKEKLPVSPMKNYFPDYEGGDDYAAACDYILNRFVSLNQHETKQIYTHFTCATDTTQIRFVMAAVNDIIIQENLRLCGLI.

Residues 1–25 (MGCGMSTEDKEGKARNEEIENQLKR) are disordered. G2 is lipidated: N-myristoyl glycine. C3 carries S-palmitoyl cysteine lipidation. The segment covering 7-25 (TEDKEGKARNEEIENQLKR) has biased composition (basic and acidic residues). The 322-residue stretch at 32–353 (NEIKMLLLGA…QENLRLCGLI (322 aa)) folds into the G-alpha domain. The G1 motif stretch occupies residues 35–48 (KMLLLGAGESGKST). GTP-binding residues include E43, S44, G45, K46, S47, T48, D150, L175, T181, G203, N269, K270, D272, and A325. S47 serves as a coordination point for Mg(2+). The tract at residues 173–181 (DVLRSRVKT) is G2 motif. Mg(2+) is bound at residue T181. The segment at 196–205 (YRMFDVGGQR) is G3 motif. The tract at residues 265–272 (ILFLNKID) is G4 motif. A G5 motif region spans residues 323-328 (TCATDT).

It belongs to the G-alpha family. G(q) subfamily. In terms of assembly, g proteins are composed of 3 units; alpha, beta and gamma. The alpha chain contains the guanine nucleotide binding site. Mg(2+) is required as a cofactor.

In terms of biological role, guanine nucleotide-binding proteins (G proteins) are involved as modulators or transducers in various transmembrane signaling systems. This Colletotrichum trifolii protein is Guanine nucleotide-binding protein subunit alpha (CTG1).